Here is a 204-residue protein sequence, read N- to C-terminus: Large ribosomal subunit protein bL17 (204 aa).

The interval 124–204 (QAVGEAERAR…DDDGPAESKS (81 aa)) is disordered. The segment covering 128–142 (EAERARGTRFSERRK) has biased composition (basic and acidic residues). The segment covering 156–191 (SESPTAAAVAAQSAEEQAPVEETLTAQAAETSAATV) has biased composition (low complexity). A compositionally biased stretch (acidic residues) spans 192–204 (EETDDDGPAESKS).

The protein belongs to the bacterial ribosomal protein bL17 family. As to quaternary structure, part of the 50S ribosomal subunit. Contacts protein L32.

In Frankia alni (strain DSM 45986 / CECT 9034 / ACN14a), this protein is Large ribosomal subunit protein bL17.